The sequence spans 292 residues: Nitrogenase iron protein 2 (292 aa).

12–19 (GKGGIGKS) is a binding site for ATP. [4Fe-4S] cluster is bound at residue Cys-97. Arg-100 carries the ADP-ribosylarginine; by dinitrogenase reductase ADP-ribosyltransferase modification. Residue Cys-133 participates in [4Fe-4S] cluster binding.

Belongs to the NifH/BchL/ChlL family. In terms of assembly, homodimer. [4Fe-4S] cluster serves as cofactor. In terms of processing, the reversible ADP-ribosylation of Arg-100 inactivates the nitrogenase reductase and regulates nitrogenase activity.

It carries out the reaction N2 + 8 reduced [2Fe-2S]-[ferredoxin] + 16 ATP + 16 H2O = H2 + 8 oxidized [2Fe-2S]-[ferredoxin] + 2 NH4(+) + 16 ADP + 16 phosphate + 6 H(+). The key enzymatic reactions in nitrogen fixation are catalyzed by the nitrogenase complex, which has 2 components: the iron protein and the molybdenum-iron protein. In Paenibacillus durus (Paenibacillus azotofixans), this protein is Nitrogenase iron protein 2 (nifH2).